A 364-amino-acid chain; its full sequence is Histidinol-phosphate aminotransferase (364 aa).

At lysine 226 the chain carries N6-(pyridoxal phosphate)lysine.

This sequence belongs to the class-II pyridoxal-phosphate-dependent aminotransferase family. Histidinol-phosphate aminotransferase subfamily. In terms of assembly, homodimer. Requires pyridoxal 5'-phosphate as cofactor.

The enzyme catalyses L-histidinol phosphate + 2-oxoglutarate = 3-(imidazol-4-yl)-2-oxopropyl phosphate + L-glutamate. It functions in the pathway amino-acid biosynthesis; L-histidine biosynthesis; L-histidine from 5-phospho-alpha-D-ribose 1-diphosphate: step 7/9. The sequence is that of Histidinol-phosphate aminotransferase from Campylobacter jejuni subsp. jejuni serotype O:6 (strain 81116 / NCTC 11828).